Reading from the N-terminus, the 205-residue chain is Heat shock protein beta-1 (205 aa).

Arg-12 is subject to Omega-N-methylarginine. At Ser-15 the chain carries Phosphoserine; by MAPKAPK2 and MAPKAPK3. Residues Ser-26 and Ser-65 each carry the phosphoserine modification. Residues 70–205 form an interaction with TGFB1I1 region; sequence APAYSRALSR…AAKSDETAAK (136 aa). The 109-residue stretch at 76–184 folds into the sHSP domain; that stretch reads ALSRQLSSGV…QSNEITIPVT (109 aa). Phosphoserine; by MAPKAPK2, MAPKAPK3 and MAPKAPK5 occurs at positions 78 and 82. Residues Ser-83, Ser-86, and Ser-98 each carry the phosphoserine modification. At Lys-123 the chain carries N6-acetyllysine. Thr-174 carries the post-translational modification Phosphothreonine. 2 positions are modified to phosphoserine: Ser-176 and Ser-199.

Belongs to the small heat shock protein (HSP20) family. Homooligomer. Homodimer; becomes monomeric upon activation. Heterooligomer; with HSPB6. Associates with alpha- and beta-tubulin. Interacts with TGFB1I1. Interacts with CRYAB. Interacts with HSPB8. Interacts with HSPBAP1. In terms of processing, phosphorylated upon exposure to protein kinase C activators and heat shock. Phosphorylation by MAPKAPK2 and MAPKAPK3 in response to stress dissociates HSPB1 from large small heat-shock protein (sHsps) oligomers and impairs its chaperone activity and ability to protect against oxidative stress effectively. Phosphorylation by MAPKAPK5 in response to PKA stimulation induces F-actin rearrangement. In terms of tissue distribution, detected in all tissues tested: skeletal muscle, heart, aorta, large intestine, small intestine, stomach, esophagus, bladder, adrenal gland, thyroid, pancreas, testis, adipose tissue, kidney, liver, spleen, cerebral cortex, blood serum and cerebrospinal fluid. Highest levels are found in the heart and in tissues composed of striated and smooth muscle.

The protein resides in the cytoplasm. The protein localises to the nucleus. It localises to the cytoskeleton. Its subcellular location is the spindle. Small heat shock protein which functions as a molecular chaperone probably maintaining denatured proteins in a folding-competent state. Plays a role in stress resistance and actin organization. Through its molecular chaperone activity may regulate numerous biological processes including the phosphorylation and the axonal transport of neurofilament proteins. The protein is Heat shock protein beta-1 (HSPB1) of Homo sapiens (Human).